The following is an 83-amino-acid chain: Cytochrome b559 subunit alpha (83 aa).

The chain crosses the membrane as a helical span at residues 21–35; the sequence is VIHSITIPSLFIAGW. Residue His-23 participates in heme binding.

Belongs to the PsbE/PsbF family. As to quaternary structure, heterodimer of an alpha subunit and a beta subunit. PSII is composed of 1 copy each of membrane proteins PsbA, PsbB, PsbC, PsbD, PsbE, PsbF, PsbH, PsbI, PsbJ, PsbK, PsbL, PsbM, PsbT, PsbX, PsbY, PsbZ, Psb30/Ycf12, at least 3 peripheral proteins of the oxygen-evolving complex and a large number of cofactors. It forms dimeric complexes. Heme b is required as a cofactor.

Its subcellular location is the plastid. The protein localises to the chloroplast thylakoid membrane. Functionally, this b-type cytochrome is tightly associated with the reaction center of photosystem II (PSII). PSII is a light-driven water:plastoquinone oxidoreductase that uses light energy to abstract electrons from H(2)O, generating O(2) and a proton gradient subsequently used for ATP formation. It consists of a core antenna complex that captures photons, and an electron transfer chain that converts photonic excitation into a charge separation. The protein is Cytochrome b559 subunit alpha of Liriodendron tulipifera (Tuliptree).